The primary structure comprises 146 residues: Transcriptional regulator MraZ (146 aa).

2 SpoVT-AbrB domains span residues 5–48 (TSYH…TLEE) and 77–120 (ASEC…SRAK).

This sequence belongs to the MraZ family. As to quaternary structure, forms oligomers.

It is found in the cytoplasm. The protein localises to the nucleoid. The protein is Transcriptional regulator MraZ of Desulfosudis oleivorans (strain DSM 6200 / JCM 39069 / Hxd3) (Desulfococcus oleovorans).